The chain runs to 380 residues: Shedu protein SduA (380 aa).

Only component of antiviral defense system Shedu. Expression of Shedu in B.subtilis (strain BEST7003) confers resistance to phages phi105, phi29, rho14 and to a lesser extent to SPP1. May be an endonuclease. The polypeptide is Shedu protein SduA (Bacillus cereus (strain B4264)).